The chain runs to 1551 residues: Pentafunctional AROM polypeptide (1551 aa).

Residues 1–379 form a 3-dehydroquinate synthase region; that stretch reads MSIEKVPILG…YQLKAHQVSK (379 aa). NAD(+)-binding positions include 42 to 44, 80 to 83, 111 to 113, and aspartate 116; these read DTN, ENNK, and GGV. Arginine 127 provides a ligand contact to 7-phospho-2-dehydro-3-deoxy-D-arabino-heptonate. Residue 136-137 coordinates NAD(+); it reads TT. Aspartate 143 and lysine 149 together coordinate 7-phospho-2-dehydro-3-deoxy-D-arabino-heptonate. An NAD(+)-binding site is contributed by lysine 158. Position 159 (asparagine 159) interacts with 7-phospho-2-dehydro-3-deoxy-D-arabino-heptonate. NAD(+) contacts are provided by residues 176–179 and asparagine 187; that span reads FLET. A Zn(2+)-binding site is contributed by glutamate 191. Residues 191–194 and lysine 243 each bind 7-phospho-2-dehydro-3-deoxy-D-arabino-heptonate; that span reads EVVK. The active-site Proton acceptor; for 3-dehydroquinate synthase activity is the glutamate 253. 7-phospho-2-dehydro-3-deoxy-D-arabino-heptonate contacts are provided by residues 257-261 and histidine 264; that span reads RNLLN. Position 264 (histidine 264) interacts with Zn(2+). The active-site Proton acceptor; for 3-dehydroquinate synthase activity is the histidine 268. Residues histidine 280 and lysine 351 each contribute to the 7-phospho-2-dehydro-3-deoxy-D-arabino-heptonate site. Zn(2+) is bound at residue histidine 280. Residues 392–838 are EPSP synthase; the sequence is VHPFTNPPKE…WDILHSKFKI (447 aa). The interval 858 to 1048 is shikimate kinase; the sequence is DKSIIVIGMR…VPAGRSAAVV (191 aa). Position 865–872 (865–872) interacts with ATP; it reads GMRGTGKS. A 3-dehydroquinase region spans residues 1049-1258; that stretch reads LTSPDLNEVV…NDEEFLTIGE (210 aa). Arginine 1194 acts as the Schiff-base intermediate with substrate; for 3-dehydroquinate dehydratase activity in catalysis. Positions 1271 to 1551 are shikimate dehydrogenase; sequence AKKFWVIGSP…EIIHRAVVEE (281 aa).

In the N-terminal section; belongs to the sugar phosphate cyclases superfamily. Dehydroquinate synthase family. It in the 2nd section; belongs to the EPSP synthase family. The protein in the 3rd section; belongs to the shikimate kinase family. This sequence in the 4th section; belongs to the type-I 3-dehydroquinase family. In the C-terminal section; belongs to the shikimate dehydrogenase family. As to quaternary structure, homodimer. Zn(2+) is required as a cofactor.

It is found in the cytoplasm. It catalyses the reaction 7-phospho-2-dehydro-3-deoxy-D-arabino-heptonate = 3-dehydroquinate + phosphate. It carries out the reaction 3-dehydroquinate = 3-dehydroshikimate + H2O. The enzyme catalyses shikimate + NADP(+) = 3-dehydroshikimate + NADPH + H(+). The catalysed reaction is shikimate + ATP = 3-phosphoshikimate + ADP + H(+). It catalyses the reaction 3-phosphoshikimate + phosphoenolpyruvate = 5-O-(1-carboxyvinyl)-3-phosphoshikimate + phosphate. Its pathway is metabolic intermediate biosynthesis; chorismate biosynthesis; chorismate from D-erythrose 4-phosphate and phosphoenolpyruvate: step 2/7. It functions in the pathway metabolic intermediate biosynthesis; chorismate biosynthesis; chorismate from D-erythrose 4-phosphate and phosphoenolpyruvate: step 3/7. It participates in metabolic intermediate biosynthesis; chorismate biosynthesis; chorismate from D-erythrose 4-phosphate and phosphoenolpyruvate: step 4/7. The protein operates within metabolic intermediate biosynthesis; chorismate biosynthesis; chorismate from D-erythrose 4-phosphate and phosphoenolpyruvate: step 5/7. Its pathway is metabolic intermediate biosynthesis; chorismate biosynthesis; chorismate from D-erythrose 4-phosphate and phosphoenolpyruvate: step 6/7. In terms of biological role, the AROM polypeptide catalyzes 5 consecutive enzymatic reactions in prechorismate polyaromatic amino acid biosynthesis. The protein is Pentafunctional AROM polypeptide of Candida albicans (strain SC5314 / ATCC MYA-2876) (Yeast).